The sequence spans 332 residues: Glycerol-3-phosphate dehydrogenase [NAD(P)+] (332 aa).

NADPH is bound by residues Ser15, Trp16, and Lys110. Positions 110, 137, and 139 each coordinate sn-glycerol 3-phosphate. Residue Ala141 participates in NADPH binding. Sn-glycerol 3-phosphate is bound by residues Lys192, Asp245, Ser255, Arg256, and Asn257. Lys192 serves as the catalytic Proton acceptor. Arg256 is a binding site for NADPH. Residue Glu282 participates in NADPH binding.

It belongs to the NAD-dependent glycerol-3-phosphate dehydrogenase family.

It localises to the cytoplasm. It carries out the reaction sn-glycerol 3-phosphate + NAD(+) = dihydroxyacetone phosphate + NADH + H(+). The catalysed reaction is sn-glycerol 3-phosphate + NADP(+) = dihydroxyacetone phosphate + NADPH + H(+). Its pathway is membrane lipid metabolism; glycerophospholipid metabolism. Its function is as follows. Catalyzes the reduction of the glycolytic intermediate dihydroxyacetone phosphate (DHAP) to sn-glycerol 3-phosphate (G3P), the key precursor for phospholipid synthesis. The protein is Glycerol-3-phosphate dehydrogenase [NAD(P)+] of Coxiella burnetii (strain CbuG_Q212) (Coxiella burnetii (strain Q212)).